Reading from the N-terminus, the 249-residue chain is tRNA (guanine-N(1)-)-methyltransferase (249 aa).

S-adenosyl-L-methionine contacts are provided by residues G113 and 133 to 138; that span reads IGDFVL.

Belongs to the RNA methyltransferase TrmD family. As to quaternary structure, homodimer.

The protein localises to the cytoplasm. The enzyme catalyses guanosine(37) in tRNA + S-adenosyl-L-methionine = N(1)-methylguanosine(37) in tRNA + S-adenosyl-L-homocysteine + H(+). Its function is as follows. Specifically methylates guanosine-37 in various tRNAs. In Aliivibrio fischeri (strain ATCC 700601 / ES114) (Vibrio fischeri), this protein is tRNA (guanine-N(1)-)-methyltransferase.